The primary structure comprises 235 residues: Segregation and condensation protein A (235 aa).

This sequence belongs to the ScpA family. Component of a cohesin-like complex composed of ScpA, ScpB and the Smc homodimer, in which ScpA and ScpB bind to the head domain of Smc. The presence of the three proteins is required for the association of the complex with DNA.

The protein resides in the cytoplasm. In terms of biological role, participates in chromosomal partition during cell division. May act via the formation of a condensin-like complex containing Smc and ScpB that pull DNA away from mid-cell into both cell halves. This is Segregation and condensation protein A from Streptococcus equi subsp. zooepidemicus (strain H70).